A 917-amino-acid polypeptide reads, in one-letter code: DNA mismatch repair protein spellchecker 1 (917 aa).

Position 667–674 (667–674 (GPNMGGKS)) interacts with ATP.

Belongs to the DNA mismatch repair MutS family. In terms of assembly, heterodimer of Msh2/Spel and Msh6.

It localises to the nucleus. Its function is as follows. Involved in postreplication mismatch repair. Binds specifically to DNA containing mismatched nucleotides thus providing a target for the excision repair processes characteristic of postreplication mismatch repair. The protein is DNA mismatch repair protein spellchecker 1 (spel1) of Drosophila melanogaster (Fruit fly).